The primary structure comprises 227 residues: Esterase OVCA2 (227 aa).

The tract at residues 44 to 68 (GPHPVPDPPGPEGARSDFGSCPPEE) is disordered. Residues S119, D179, and H206 each act as charge relay system in the active site.

The protein belongs to the LovG family. Post-translationally, proteolytically degraded in response to RA and 4HPR treatment in a time- and dose-dependent manner in the promyelocytic leukemia cell line HL-60. In terms of tissue distribution, ubiquitously expressed.

It catalyses the reaction a carboxylic ester + H2O = an alcohol + a carboxylate + H(+). In terms of biological role, exhibits ester hydrolase activity with a strong preference for long-chain alkyl ester substrates and high selectivity against a variety of short, branched, and substituted esters. Is able to hydrolyze ester bonds within a wide range of p-nitrophenyl derivatives (C2-C14) in vitro, with a strong preference toward substrates of &gt;8 carbons. The sequence is that of Esterase OVCA2 from Homo sapiens (Human).